A 165-amino-acid chain; its full sequence is 6,7-dimethyl-8-ribityllumazine synthase (165 aa).

Residues phenylalanine 24, 62–64 (AFE), and 86–88 (AVI) contribute to the 5-amino-6-(D-ribitylamino)uracil site. 91-92 (DT) is a binding site for (2S)-2-hydroxy-3-oxobutyl phosphate. Residue histidine 94 is the Proton donor of the active site. Position 119 (phenylalanine 119) interacts with 5-amino-6-(D-ribitylamino)uracil. A (2S)-2-hydroxy-3-oxobutyl phosphate-binding site is contributed by arginine 133.

Belongs to the DMRL synthase family.

The enzyme catalyses (2S)-2-hydroxy-3-oxobutyl phosphate + 5-amino-6-(D-ribitylamino)uracil = 6,7-dimethyl-8-(1-D-ribityl)lumazine + phosphate + 2 H2O + H(+). Its pathway is cofactor biosynthesis; riboflavin biosynthesis; riboflavin from 2-hydroxy-3-oxobutyl phosphate and 5-amino-6-(D-ribitylamino)uracil: step 1/2. Functionally, catalyzes the formation of 6,7-dimethyl-8-ribityllumazine by condensation of 5-amino-6-(D-ribitylamino)uracil with 3,4-dihydroxy-2-butanone 4-phosphate. This is the penultimate step in the biosynthesis of riboflavin. The polypeptide is 6,7-dimethyl-8-ribityllumazine synthase (Prochlorococcus marinus (strain MIT 9303)).